Reading from the N-terminus, the 1003-residue chain is SWI/SNF-related matrix-associated actin-dependent regulator of chromatin subfamily A containing DEAD/H box 1 (1003 aa).

Disordered stretches follow at residues 15-130, 172-235, and 274-351; these read KKID…SKYK, GSSR…HFPD, and AKKE…EDYS. 3 stretches are compositionally biased toward basic and acidic residues: residues 172–188, 221–235, and 274–294; these read GSSR…DSSP, KQEA…HFPD, and AKKE…DNKS. A CUE domain is found at 221 to 264; sequence KQEASVKKLQRHFPDLDKEELREVLQEHDWSFHEALEALKLFAE. The segment covering 295-311 has biased composition (low complexity); that stretch reads SAKAKANQNSNKAMAQN. A compositionally biased stretch (basic and acidic residues) spans 321 to 333; sequence KYSENAKRDTRDL. The region spanning 486-654 is the Helicase ATP-binding domain; sequence ALLHKHKVNM…MSLLNFVMPH (169 aa). 499–506 contributes to the ATP binding site; it reads DEMGLGKT. Positions 605–608 match the DEGH box motif; sequence DEGH. In terms of domain architecture, Helicase C-terminal spans 835–997; it reads ILEKLLSDIK…TIPLDMATLL (163 aa).

This sequence belongs to the SNF2/RAD54 helicase family.

Its subcellular location is the nucleus. The protein localises to the chromosome. The catalysed reaction is ATP + H2O = ADP + phosphate + H(+). DNA helicase that possesses intrinsic ATP-dependent nucleosome-remodeling activity and is both required for DNA repair and heterochromatin organization. Promotes DNA end resection of double-strand breaks (DSBs) following DNA damage: probably acts by weakening histone DNA interactions in nucleosomes flanking DSBs. Required for the restoration of heterochromatin organization after replication. The sequence is that of SWI/SNF-related matrix-associated actin-dependent regulator of chromatin subfamily A containing DEAD/H box 1 (smarcad1) from Xenopus tropicalis (Western clawed frog).